Here is a 337-residue protein sequence, read N- to C-terminus: Succinylglutamate desuccinylase (337 aa).

Residues His59, Glu62, and His152 each coordinate Zn(2+). Glu216 is an active-site residue.

The protein belongs to the AspA/AstE family. Succinylglutamate desuccinylase subfamily. The cofactor is Zn(2+).

It catalyses the reaction N-succinyl-L-glutamate + H2O = L-glutamate + succinate. Its pathway is amino-acid degradation; L-arginine degradation via AST pathway; L-glutamate and succinate from L-arginine: step 5/5. Its function is as follows. Transforms N(2)-succinylglutamate into succinate and glutamate. The polypeptide is Succinylglutamate desuccinylase (Ectopseudomonas mendocina (strain ymp) (Pseudomonas mendocina)).